The chain runs to 245 residues: MGAYDELMKRRGRALLPLLDPDKVISEEDYYERAVKALCEYAATFLVGGSTGVGQIETEKTVALVKKNCDKPVTVFPGSPCQVAPSADAILFMSLLNSTNRKYLIDYQLEGSLLVYRYGLEAIPTAYIIVGEGGTAGWVGEAKAIPPEKPELLSMYVLAAKYLGFKVVYLEAGSGVKRSVPPEAVRLAKKLLGEEVILIVGGGIKDEEVAAEILRAGADGVVVGTVVERDLSAAERIARRVAGWT.

The Mg(2+) site is built by Asp20 and Ser50. Sn-glycerol 1-phosphate-binding positions include 169-175, 202-203, and 224-225; these read YLEAGSG, GG, and GT.

The protein belongs to the GGGP/HepGP synthase family. Group II subfamily. Requires Mg(2+) as cofactor.

It localises to the cytoplasm. It carries out the reaction sn-glycerol 1-phosphate + (2E,6E,10E)-geranylgeranyl diphosphate = sn-3-O-(geranylgeranyl)glycerol 1-phosphate + diphosphate. It participates in membrane lipid metabolism; glycerophospholipid metabolism. Functionally, prenyltransferase that catalyzes the transfer of the geranylgeranyl moiety of geranylgeranyl diphosphate (GGPP) to the C3 hydroxyl of sn-glycerol-1-phosphate (G1P). This reaction is the first ether-bond-formation step in the biosynthesis of archaeal membrane lipids. This chain is Geranylgeranylglyceryl phosphate synthase, found in Ignicoccus hospitalis (strain KIN4/I / DSM 18386 / JCM 14125).